Consider the following 525-residue polypeptide: 2-isopropylmalate synthase (525 aa).

Residues 5 to 267 (VIIFDTTLRD…HTGIHHQEIY (263 aa)) enclose the Pyruvate carboxyltransferase domain. Mn(2+) is bound by residues Asp14, His202, His204, and Asn238. Positions 392–525 (RLEYFSVQSS…NNSQDMQETV (134 aa)) are regulatory domain.

It belongs to the alpha-IPM synthase/homocitrate synthase family. LeuA type 1 subfamily. As to quaternary structure, homodimer. Requires Mn(2+) as cofactor.

It is found in the cytoplasm. It carries out the reaction 3-methyl-2-oxobutanoate + acetyl-CoA + H2O = (2S)-2-isopropylmalate + CoA + H(+). It participates in amino-acid biosynthesis; L-leucine biosynthesis; L-leucine from 3-methyl-2-oxobutanoate: step 1/4. Functionally, catalyzes the condensation of the acetyl group of acetyl-CoA with 3-methyl-2-oxobutanoate (2-ketoisovalerate) to form 3-carboxy-3-hydroxy-4-methylpentanoate (2-isopropylmalate). The protein is 2-isopropylmalate synthase of Sodalis glossinidius (strain morsitans).